The primary structure comprises 96 residues: Transmembrane protein PMIS2 (96 aa).

The next 2 helical transmembrane spans lie at 31–51 (VMLA…AIYF) and 76–96 (WFNM…VLVL).

It belongs to the CD225/Dispanin family. As to expression, specifically expressed in testis.

Its subcellular location is the membrane. In terms of biological role, may play a role in spermatozoa mobility. The sequence is that of Transmembrane protein PMIS2 from Mus musculus (Mouse).